A 222-amino-acid chain; its full sequence is Riboflavin kinase (222 aa).

An H-T-H motif-like region spans residues 1 to 94; that stretch reads METIDAEDAA…AKIFDVKDEQ (94 aa). The segment at 95 to 222 is riboflavin kinase; that stretch reads YVLTGTVMSG…ENSEVVVVIG (128 aa). 104 to 109 contributes to the CDP binding site; it reads GVGEGR. Mg(2+) contacts are provided by Thr-133 and Asn-135. Thr-190 and Glu-198 together coordinate FMN. 203–206 is a binding site for CDP; the sequence is TQLR.

This sequence belongs to the archaeal riboflavin kinase family. The cofactor is Mg(2+).

It catalyses the reaction riboflavin + CTP = CDP + FMN + H(+). It functions in the pathway cofactor biosynthesis; FMN biosynthesis; FMN from riboflavin (CTP route): step 1/1. In terms of biological role, catalyzes the CTP-dependent phosphorylation of riboflavin (vitamin B2) to form flavin mononucleotide (FMN). This Methanocorpusculum labreanum (strain ATCC 43576 / DSM 4855 / Z) protein is Riboflavin kinase (ribK).